We begin with the raw amino-acid sequence, 254 residues long: 3-deoxy-manno-octulosonate cytidylyltransferase (254 aa).

It belongs to the KdsB family.

It is found in the cytoplasm. The enzyme catalyses 3-deoxy-alpha-D-manno-oct-2-ulosonate + CTP = CMP-3-deoxy-beta-D-manno-octulosonate + diphosphate. It participates in nucleotide-sugar biosynthesis; CMP-3-deoxy-D-manno-octulosonate biosynthesis; CMP-3-deoxy-D-manno-octulosonate from 3-deoxy-D-manno-octulosonate and CTP: step 1/1. Activates KDO (a required 8-carbon sugar) for incorporation into bacterial lipopolysaccharide in Gram-negative bacteria. The protein is 3-deoxy-manno-octulosonate cytidylyltransferase of Lawsonia intracellularis (strain PHE/MN1-00).